Here is an 841-residue protein sequence, read N- to C-terminus: Outer membrane usher protein MyfC (841 aa).

The first 26 residues, 1-26 (MFFSLKNSVAKLIAFWAICLVLPVWA), serve as a signal peptide directing secretion. C817 and C840 are joined by a disulfide.

The protein belongs to the fimbrial export usher family.

The protein resides in the cell outer membrane. Functionally, involved in the export and assembly of the MyfA fimbrial subunit. This is Outer membrane usher protein MyfC (myfC) from Yersinia enterocolitica.